Here is a 361-residue protein sequence, read N- to C-terminus: Peptide chain release factor 1 (361 aa).

Glutamine 235 is subject to N5-methylglutamine.

Belongs to the prokaryotic/mitochondrial release factor family. In terms of processing, methylated by PrmC. Methylation increases the termination efficiency of RF1.

The protein localises to the cytoplasm. In terms of biological role, peptide chain release factor 1 directs the termination of translation in response to the peptide chain termination codons UAG and UAA. The protein is Peptide chain release factor 1 of Xanthomonas campestris pv. campestris (strain 8004).